The chain runs to 305 residues: tRNA pseudouridine synthase B (305 aa).

D38 functions as the Nucleophile in the catalytic mechanism.

The protein belongs to the pseudouridine synthase TruB family. Type 1 subfamily.

The enzyme catalyses uridine(55) in tRNA = pseudouridine(55) in tRNA. Its function is as follows. Responsible for synthesis of pseudouridine from uracil-55 in the psi GC loop of transfer RNAs. The chain is tRNA pseudouridine synthase B from Latilactobacillus sakei subsp. sakei (strain 23K) (Lactobacillus sakei subsp. sakei).